Reading from the N-terminus, the 445-residue chain is Tubulin beta-4B chain (445 aa).

The short motif at 1-4 (MREI) is the MREI motif element. A GTP-binding site is contributed by Gln11. A Phosphothreonine modification is found at Thr55. Residue Lys58 is modified to N6-acetyllysine. GTP contacts are provided by Glu69, Ser138, Gly142, Thr143, and Gly144. Position 69 (Glu69) interacts with Mg(2+). Ser172 carries the post-translational modification Phosphoserine; by CDK1. GTP contacts are provided by Asn204 and Asn226. The disordered stretch occupies residues 426 to 445 (QDATAEEEGEFEEEAEEEVA). Residues 429–445 (TAEEEGEFEEEAEEEVA) are compositionally biased toward acidic residues. Glu438 carries the post-translational modification 5-glutamyl polyglutamate.

Belongs to the tubulin family. In terms of assembly, dimer of alpha and beta chains. A typical microtubule is a hollow water-filled tube with an outer diameter of 25 nm and an inner diameter of 15 nM. Alpha-beta heterodimers associate head-to-tail to form protofilaments running lengthwise along the microtubule wall with the beta-tubulin subunit facing the microtubule plus end conferring a structural polarity. Microtubules usually have 13 protofilaments but different protofilament numbers can be found in some organisms and specialized cells. Component of sperm flagellar doublet microtubules. Requires Mg(2+) as cofactor. Some glutamate residues at the C-terminus are polyglycylated, resulting in polyglycine chains on the gamma-carboxyl group. Glycylation is mainly limited to tubulin incorporated into axonemes (cilia and flagella) whereas glutamylation is prevalent in neuronal cells, centrioles, axonemes, and the mitotic spindle. Both modifications can coexist on the same protein on adjacent residues, and lowering polyglycylation levels increases polyglutamylation, and reciprocally. Cilia and flagella glycylation is required for their stability and maintenance. Flagella glycylation controls sperm motility. In terms of processing, some glutamate residues at the C-terminus are polyglutamylated, resulting in polyglutamate chains on the gamma-carboxyl group. Polyglutamylation plays a key role in microtubule severing by spastin (SPAST). SPAST preferentially recognizes and acts on microtubules decorated with short polyglutamate tails: severing activity by SPAST increases as the number of glutamates per tubulin rises from one to eight, but decreases beyond this glutamylation threshold. Glutamylation is also involved in cilia motility. Post-translationally, phosphorylated on Ser-172 by CDK1 during the cell cycle, from metaphase to telophase, but not in interphase. This phosphorylation inhibits tubulin incorporation into microtubules.

It is found in the cytoplasm. The protein localises to the cytoskeleton. The protein resides in the flagellum axoneme. Tubulin is the major constituent of microtubules, a cylinder consisting of laterally associated linear protofilaments composed of alpha- and beta-tubulin heterodimers. Microtubules grow by the addition of GTP-tubulin dimers to the microtubule end, where a stabilizing cap forms. Below the cap, tubulin dimers are in GDP-bound state, owing to GTPase activity of alpha-tubulin. The sequence is that of Tubulin beta-4B chain (TUBB4B) from Bos taurus (Bovine).